Reading from the N-terminus, the 582-residue chain is La-related protein 7 (582 aa).

Met-1 is subject to N-acetylmethionine. The tract at residues 1 to 27 (METESGNQEKVMEEESTEKKKEVEKKK) is disordered. The span at 10–25 (KVMEEESTEKKKEVEK) shows a compositional bias: basic and acidic residues. The HTH La-type RNA-binding domain maps to 28–122 (RSRVKQVLAD…KPLGERPKDE (95 aa)). Positions 125–203 (RTVYVELLPK…PRKPGIFPKT (79 aa)) constitute an RRM domain. Disordered regions lie at residues 188-368 (NPPE…ERHK) and 410-442 (KSES…RTQE). Residues 219–228 (KKKKKKKGRM) show a composition bias toward basic residues. The segment covering 229-240 (KKEDNIQAKEEN) has biased composition (basic and acidic residues). Lys-237 is covalently cross-linked (Glycyl lysine isopeptide (Lys-Gly) (interchain with G-Cter in SUMO2)). A Phosphothreonine modification is found at Thr-257. 6 positions are modified to phosphoserine: Ser-258, Ser-261, Ser-273, Ser-298, Ser-299, and Ser-300. Over residues 316–335 (IQKDIIKEASEASKENRDIE) the composition is skewed to basic and acidic residues. Phosphoserine is present on Ser-337. At Thr-338 the chain carries Phosphothreonine. At Ser-351 the chain carries Phosphoserine. Positions 354 to 367 (KTKRKHKKKHKERH) are enriched in basic residues. Lys-410 participates in a covalent cross-link: Glycyl lysine isopeptide (Lys-Gly) (interchain with G-Cter in SUMO2). Positions 428 to 442 (KNEKTANREECRTQE) are enriched in basic and acidic residues. The 114-residue stretch at 450–563 (QFVSGVIVKI…TEKLITKAEK (114 aa)) folds into the xRRM domain.

Belongs to the LARP7 family. As to quaternary structure, core component of the 7SK RNP complex, at least composed of 7SK RNA, LARP7, MEPCE, HEXIM1 (or HEXIM2) and P-TEFb (composed of CDK9 and CCNT1/cyclin-T1). Interacts with METTL16. Interacts with RBM7; upon genotoxic stress this interaction is enhanced, triggering the release of inactive P-TEFb complex from the core, yielding to P-TEFb complex activation. Associates with box C/D small nucleolar ribonucleoprotein (snoRNP) complexes.

Its subcellular location is the nucleus. The protein resides in the nucleoplasm. In terms of biological role, RNA-binding protein that specifically binds distinct small nuclear RNA (snRNAs) and regulates their processing and function. Specifically binds the 7SK snRNA (7SK RNA) and acts as a core component of the 7SK ribonucleoprotein (RNP) complex, thereby acting as a negative regulator of transcription elongation by RNA polymerase II. The 7SK RNP complex sequesters the positive transcription elongation factor b (P-TEFb) in a large inactive 7SK RNP complex preventing RNA polymerase II phosphorylation and subsequent transcriptional elongation. The 7SK RNP complex also promotes snRNA gene transcription by RNA polymerase II via interaction with the little elongation complex (LEC). LARP7 specifically binds to the highly conserved 3'-terminal U-rich stretch of 7SK RNA; on stimulation, remains associated with 7SK RNA, whereas P-TEFb is released from the complex. LARP7 also acts as a regulator of mRNA splicing fidelity by promoting U6 snRNA processing. Specifically binds U6 snRNAs and associates with a subset of box C/D RNP complexes: promotes U6 snRNA 2'-O-methylation by facilitating U6 snRNA loading into box C/D RNP complexes. U6 snRNA 2'-O-methylation is required for mRNA splicing fidelity. Binds U6 snRNAs with a 5'-CAGGG-3' sequence motif. U6 snRNA processing is required for spermatogenesis. This chain is La-related protein 7, found in Homo sapiens (Human).